A 321-amino-acid polypeptide reads, in one-letter code: tRNA U34 carboxymethyltransferase (321 aa).

Residues Lys90, Trp104, Lys109, Gly129, 151–153, 180–181, Met195, Tyr199, and Arg314 contribute to the carboxy-S-adenosyl-L-methionine site; these read DPT and IE.

The protein belongs to the class I-like SAM-binding methyltransferase superfamily. CmoB family. As to quaternary structure, homotetramer.

It catalyses the reaction carboxy-S-adenosyl-L-methionine + 5-hydroxyuridine(34) in tRNA = 5-carboxymethoxyuridine(34) in tRNA + S-adenosyl-L-homocysteine + H(+). Its function is as follows. Catalyzes carboxymethyl transfer from carboxy-S-adenosyl-L-methionine (Cx-SAM) to 5-hydroxyuridine (ho5U) to form 5-carboxymethoxyuridine (cmo5U) at position 34 in tRNAs. This is tRNA U34 carboxymethyltransferase from Histophilus somni (strain 2336) (Haemophilus somnus).